The following is a 288-amino-acid chain: Light-independent protochlorophyllide reductase iron-sulfur ATP-binding protein (288 aa).

Residues 10–15 (GIGKST) and K39 contribute to the ATP site. S14 serves as a coordination point for Mg(2+). The [4Fe-4S] cluster site is built by C95 and C129. ATP is bound at residue 180–181 (NR).

The protein belongs to the NifH/BchL/ChlL family. Homodimer. Protochlorophyllide reductase is composed of three subunits; ChlL, ChlN and ChlB. The cofactor is [4Fe-4S] cluster.

The protein localises to the plastid. It is found in the chloroplast. It carries out the reaction chlorophyllide a + oxidized 2[4Fe-4S]-[ferredoxin] + 2 ADP + 2 phosphate = protochlorophyllide a + reduced 2[4Fe-4S]-[ferredoxin] + 2 ATP + 2 H2O. Its pathway is porphyrin-containing compound metabolism; chlorophyll biosynthesis (light-independent). Component of the dark-operative protochlorophyllide reductase (DPOR) that uses Mg-ATP and reduced ferredoxin to reduce ring D of protochlorophyllide (Pchlide) to form chlorophyllide a (Chlide). This reaction is light-independent. The L component serves as a unique electron donor to the NB-component of the complex, and binds Mg-ATP. The sequence is that of Light-independent protochlorophyllide reductase iron-sulfur ATP-binding protein from Chara vulgaris (Common stonewort).